A 104-amino-acid polypeptide reads, in one-letter code: uncharacterized protein (104 aa).

This is an uncharacterized protein from Bacillus subtilis (strain 168).